Here is a 271-residue protein sequence, read N- to C-terminus: Phosphate import ATP-binding protein PstB (271 aa).

An ABC transporter domain is found at Phe25–Ile266. Gly57–Ser64 is a binding site for ATP.

The protein belongs to the ABC transporter superfamily. Phosphate importer (TC 3.A.1.7) family. As to quaternary structure, the complex is composed of two ATP-binding proteins (PstB), two transmembrane proteins (PstC and PstA) and a solute-binding protein (PstS).

It is found in the cell membrane. The enzyme catalyses phosphate(out) + ATP + H2O = ADP + 2 phosphate(in) + H(+). Its function is as follows. Part of the ABC transporter complex PstSACB involved in phosphate import. Responsible for energy coupling to the transport system. The sequence is that of Phosphate import ATP-binding protein PstB from Bacillus anthracis.